The primary structure comprises 346 residues: Large ribosomal subunit protein uL3 (346 aa).

A disordered region spans residues 324 to 346 (KPPKKKPPVERPQITYVSRESKQ).

It belongs to the universal ribosomal protein uL3 family. As to quaternary structure, part of the 50S ribosomal subunit. Forms a cluster with proteins L14 and L24e.

Its function is as follows. One of the primary rRNA binding proteins, it binds directly near the 3'-end of the 23S rRNA, where it nucleates assembly of the 50S subunit. The sequence is that of Large ribosomal subunit protein uL3 from Thermococcus gammatolerans (strain DSM 15229 / JCM 11827 / EJ3).